Reading from the N-terminus, the 850-residue chain is Receptor-like serine/threonine-protein kinase SD1-8 (850 aa).

Positions 1–26 (MRGLPNFYHSYTFFFFFLLILFPAYS) are cleaved as a signal peptide. At 27 to 441 (ISANTLSASE…LEDKRNRSAK (415 aa)) the chain is on the extracellular side. In terms of domain architecture, Bulb-type lectin spans 31–153 (TLSASESLTI…KNSAPDGVLW (123 aa)). N-linked (GlcNAc...) asparagine glycosylation is found at Asn43, Asn118, and Asn242. The EGF-like domain occupies 292–328 (PKDQCDEYKECGVYGYCDSNTSPVCNCIKGFKPRNPQ). 4 cysteine pairs are disulfide-bonded: Cys296–Cys308, Cys302–Cys316, Cys378–Cys403, and Cys382–Cys388. The 82-residue stretch at 347 to 428 (CGGGDGFVRL…GGQDLYVRLA (82 aa)) folds into the PAN domain. 2 N-linked (GlcNAc...) asparagine glycosylation sites follow: Asn387 and Asn437. Residues 442–462 (IIGSSIGVSVLLLLSFIIFFL) traverse the membrane as a helical segment. The Cytoplasmic portion of the chain corresponds to 463–850 (WKRKQKRSIL…QITVSVLDAR (388 aa)). A Protein kinase domain is found at 526–807 (FSNANKLGQG…LMLGSESTTI (282 aa)). Residues 532–540 (LGQGGFGIV) and Lys554 each bind ATP. A caM-binding region spans residues 615 to 632 (SRNSKLNWQMRFDIINGI). Asp651 (proton acceptor) is an active-site residue.

It belongs to the protein kinase superfamily. Ser/Thr protein kinase family. In terms of assembly, interacts with PUB9, PUB13, PUB14 and PUB38. In terms of tissue distribution, expressed in the root-hypocotyl transition zone, at the base of lateral roots, axillary buds and pedicels.

The protein localises to the cell membrane. The catalysed reaction is L-seryl-[protein] + ATP = O-phospho-L-seryl-[protein] + ADP + H(+). The enzyme catalyses L-threonyl-[protein] + ATP = O-phospho-L-threonyl-[protein] + ADP + H(+). In terms of biological role, involved in the regulation of cellular expansion and differentiation. The sequence is that of Receptor-like serine/threonine-protein kinase SD1-8 (SD18) from Arabidopsis thaliana (Mouse-ear cress).